A 471-amino-acid chain; its full sequence is ATP synthase subunit beta 1 (471 aa).

157 to 164 (GGAGVGKT) contacts ATP.

This sequence belongs to the ATPase alpha/beta chains family. As to quaternary structure, F-type ATPases have 2 components, CF(1) - the catalytic core - and CF(0) - the membrane proton channel. CF(1) has five subunits: alpha(3), beta(3), gamma(1), delta(1), epsilon(1). CF(0) has three main subunits: a(1), b(2) and c(9-12). The alpha and beta chains form an alternating ring which encloses part of the gamma chain. CF(1) is attached to CF(0) by a central stalk formed by the gamma and epsilon chains, while a peripheral stalk is formed by the delta and b chains.

It is found in the cell inner membrane. The enzyme catalyses ATP + H2O + 4 H(+)(in) = ADP + phosphate + 5 H(+)(out). Its function is as follows. Produces ATP from ADP in the presence of a proton gradient across the membrane. The catalytic sites are hosted primarily by the beta subunits. In Pelobacter propionicus (strain DSM 2379 / NBRC 103807 / OttBd1), this protein is ATP synthase subunit beta 1.